Here is a 260-residue protein sequence, read N- to C-terminus: Pyridoxine 5'-phosphate synthase (260 aa).

Residue N6 participates in 3-amino-2-oxopropyl phosphate binding. Position 8-9 (8-9 (DH)) interacts with 1-deoxy-D-xylulose 5-phosphate. Position 17 (R17) interacts with 3-amino-2-oxopropyl phosphate. The Proton acceptor role is filled by H42. Residues R44 and H49 each contribute to the 1-deoxy-D-xylulose 5-phosphate site. The Proton acceptor role is filled by E69. 1-deoxy-D-xylulose 5-phosphate is bound at residue T99. H213 (proton donor) is an active-site residue. Residues G214 and 235–236 (GQ) each bind 3-amino-2-oxopropyl phosphate.

This sequence belongs to the PNP synthase family. In terms of assembly, homooctamer; tetramer of dimers.

Its subcellular location is the cytoplasm. It carries out the reaction 3-amino-2-oxopropyl phosphate + 1-deoxy-D-xylulose 5-phosphate = pyridoxine 5'-phosphate + phosphate + 2 H2O + H(+). Its pathway is cofactor biosynthesis; pyridoxine 5'-phosphate biosynthesis; pyridoxine 5'-phosphate from D-erythrose 4-phosphate: step 5/5. Its function is as follows. Catalyzes the complicated ring closure reaction between the two acyclic compounds 1-deoxy-D-xylulose-5-phosphate (DXP) and 3-amino-2-oxopropyl phosphate (1-amino-acetone-3-phosphate or AAP) to form pyridoxine 5'-phosphate (PNP) and inorganic phosphate. The chain is Pyridoxine 5'-phosphate synthase from Sulfurimonas denitrificans (strain ATCC 33889 / DSM 1251) (Thiomicrospira denitrificans (strain ATCC 33889 / DSM 1251)).